The chain runs to 327 residues: DNA-directed RNA polymerase subunit alpha (327 aa).

The tract at residues 1–233 (MVREKVKVST…NLFIPFLHVE (233 aa)) is alpha N-terminal domain (alpha-NTD). The interval 267 to 327 (LAFQYIFIDQ…KKILDILEKK (61 aa)) is alpha C-terminal domain (alpha-CTD).

This sequence belongs to the RNA polymerase alpha chain family. As to quaternary structure, in plastids the minimal PEP RNA polymerase catalytic core is composed of four subunits: alpha, beta, beta', and beta''. When a (nuclear-encoded) sigma factor is associated with the core the holoenzyme is formed, which can initiate transcription.

The protein localises to the plastid. It is found in the chloroplast. The enzyme catalyses RNA(n) + a ribonucleoside 5'-triphosphate = RNA(n+1) + diphosphate. In terms of biological role, DNA-dependent RNA polymerase catalyzes the transcription of DNA into RNA using the four ribonucleoside triphosphates as substrates. This Draba nemorosa (Woodland whitlowgrass) protein is DNA-directed RNA polymerase subunit alpha.